A 71-amino-acid polypeptide reads, in one-letter code: Calcium dodecin (71 aa).

Glu-18 contributes to the Ca(2+) binding site.

This sequence belongs to the dodecin family. In terms of assembly, homododecamer; 12 subunits assemble to form a hollow sphere with a diameter of about 75 Angstroms. Calcium ions are bound at the interface between three subunits.

Its function is as follows. Binds calcium ions. May play a role in sequestering additional small ligands. This chain is Calcium dodecin (secE2), found in Mycobacterium tuberculosis (strain ATCC 25618 / H37Rv).